A 115-amino-acid polypeptide reads, in one-letter code: NAD(P)H-quinone oxidoreductase subunit M (115 aa).

The protein belongs to the complex I NdhM subunit family. NDH-1 can be composed of about 15 different subunits; different subcomplexes with different compositions have been identified which probably have different functions.

The protein resides in the cellular thylakoid membrane. It carries out the reaction a plastoquinone + NADH + (n+1) H(+)(in) = a plastoquinol + NAD(+) + n H(+)(out). It catalyses the reaction a plastoquinone + NADPH + (n+1) H(+)(in) = a plastoquinol + NADP(+) + n H(+)(out). In terms of biological role, NDH-1 shuttles electrons from an unknown electron donor, via FMN and iron-sulfur (Fe-S) centers, to quinones in the respiratory and/or the photosynthetic chain. The immediate electron acceptor for the enzyme in this species is believed to be plastoquinone. Couples the redox reaction to proton translocation, and thus conserves the redox energy in a proton gradient. Cyanobacterial NDH-1 also plays a role in inorganic carbon-concentration. This chain is NAD(P)H-quinone oxidoreductase subunit M, found in Prochlorococcus marinus subsp. pastoris (strain CCMP1986 / NIES-2087 / MED4).